The following is a 301-amino-acid chain: D-alanine--D-alanine ligase (301 aa).

In terms of domain architecture, ATP-grasp spans 101–296 (KLMWRAAGLA…YPTLVRRVLE (196 aa)). 127 to 182 (EEELGLPLFVKPAREGSSIGVTKVKERGALKAAYEEAARHDPLVIAEKGVMGGEYT) is a binding site for ATP. 3 residues coordinate Mg(2+): D250, E263, and N265.

Belongs to the D-alanine--D-alanine ligase family. Mg(2+) is required as a cofactor. Mn(2+) serves as cofactor.

It is found in the cytoplasm. It catalyses the reaction 2 D-alanine + ATP = D-alanyl-D-alanine + ADP + phosphate + H(+). It functions in the pathway cell wall biogenesis; peptidoglycan biosynthesis. Cell wall formation. The protein is D-alanine--D-alanine ligase of Dechloromonas aromatica (strain RCB).